A 344-amino-acid polypeptide reads, in one-letter code: Phosphoribosylformylglycinamidine cyclo-ligase (344 aa).

The protein belongs to the AIR synthase family.

The protein resides in the cytoplasm. The catalysed reaction is 2-formamido-N(1)-(5-O-phospho-beta-D-ribosyl)acetamidine + ATP = 5-amino-1-(5-phospho-beta-D-ribosyl)imidazole + ADP + phosphate + H(+). The protein operates within purine metabolism; IMP biosynthesis via de novo pathway; 5-amino-1-(5-phospho-D-ribosyl)imidazole from N(2)-formyl-N(1)-(5-phospho-D-ribosyl)glycinamide: step 2/2. The protein is Phosphoribosylformylglycinamidine cyclo-ligase of Bifidobacterium animalis subsp. lactis (strain AD011).